Here is a 395-residue protein sequence, read N- to C-terminus: Imidazolonepropionase (395 aa).

Fe(3+)-binding residues include His-63 and His-65. His-63 and His-65 together coordinate Zn(2+). The 4-imidazolone-5-propanoate site is built by Arg-72, Tyr-135, and His-168. Residue Tyr-135 coordinates N-formimidoyl-L-glutamate. Fe(3+) is bound at residue His-233. Residue His-233 coordinates Zn(2+). Gln-236 contacts 4-imidazolone-5-propanoate. Asp-308 is a binding site for Fe(3+). Asp-308 is a binding site for Zn(2+). Positions 310 and 312 each coordinate N-formimidoyl-L-glutamate. Thr-313 serves as a coordination point for 4-imidazolone-5-propanoate.

It belongs to the metallo-dependent hydrolases superfamily. HutI family. Zn(2+) is required as a cofactor. It depends on Fe(3+) as a cofactor.

Its subcellular location is the cytoplasm. The enzyme catalyses 4-imidazolone-5-propanoate + H2O = N-formimidoyl-L-glutamate. It participates in amino-acid degradation; L-histidine degradation into L-glutamate; N-formimidoyl-L-glutamate from L-histidine: step 3/3. In terms of biological role, catalyzes the hydrolytic cleavage of the carbon-nitrogen bond in imidazolone-5-propanoate to yield N-formimidoyl-L-glutamate. It is the third step in the universal histidine degradation pathway. In Cereibacter sphaeroides (strain KD131 / KCTC 12085) (Rhodobacter sphaeroides), this protein is Imidazolonepropionase.